The following is a 1003-amino-acid chain: Phosphoenolpyruvate carboxylase (1003 aa).

Positions Met-1 to Glu-24 are disordered. Residues His-190 and Lys-646 contribute to the active site.

The protein belongs to the PEPCase type 1 family. Requires Mg(2+) as cofactor.

The catalysed reaction is oxaloacetate + phosphate = phosphoenolpyruvate + hydrogencarbonate. Functionally, forms oxaloacetate, a four-carbon dicarboxylic acid source for the tricarboxylic acid cycle. The sequence is that of Phosphoenolpyruvate carboxylase from Synechococcus sp. (strain WH7803).